A 1829-amino-acid chain; its full sequence is Iron-regulated protein FrpC (1829 aa).

22 Hemolysin-type calcium-binding repeats span residues 869-886 (FGHN…NDTL), 887-904 (IGGA…SDTY), 1015-1032 (NGGL…DDLL), 1033-1050 (NGDA…NDTL), 1051-1068 (NGGE…NDAL), 1069-1086 (NGGE…NDTL), 1087-1104 (IGGA…SDTY), 1215-1232 (NGGL…DDLL), 1233-1250 (NGDA…NDTL), 1251-1268 (DGGE…NDAL), 1269-1286 (NGGE…NDTL), 1287-1304 (IGGA…SDTY), 1415-1432 (NGGL…DDLL), 1433-1450 (NGDA…NDTL), 1451-1468 (DGGE…NDAL), 1469-1486 (NGGE…NDTL), 1487-1504 (IGGA…SDTY), 1615-1632 (NGGL…DDLL), 1633-1650 (NGDA…NDTL), 1651-1668 (NGGE…NDVL), 1669-1686 (NGGE…NDTL), and 1687-1704 (IGGA…SDTY).

This sequence belongs to the RTX prokaryotic toxin (TC 1.C.11) family.

It is found in the cell outer membrane. The protein localises to the secreted. May participate in the pathogenesis of meningococcal disease. This is Iron-regulated protein FrpC (frpC) from Neisseria meningitidis serogroup C.